Consider the following 172-residue polypeptide: Transcriptional repressor NrdR (172 aa).

Residues 3–34 fold into a zinc finger; that stretch reads CPYCRNTDTRVLDSRVADDGGSIRRRRTCSAC. The ATP-cone domain occupies 46 to 136; that stretch reads LTVLKRSGAS…VYRAFESADD (91 aa).

The protein belongs to the NrdR family. It depends on Zn(2+) as a cofactor.

Negatively regulates transcription of bacterial ribonucleotide reductase nrd genes and operons by binding to NrdR-boxes. In Nocardioides sp. (strain ATCC BAA-499 / JS614), this protein is Transcriptional repressor NrdR.